Reading from the N-terminus, the 542-residue chain is Tripartite motif-containing protein 26 (542 aa).

The segment at 16–57 (CSICLDYLRDPVTIDCGHVFCRSCTSDIRPISGNRPVCPLCK) adopts an RING-type zinc-finger fold. The B box-type zinc-finger motif lies at 97 to 138 (QDMKLCERHQEKLHYYCEDDGKLLCVMCRESREHRPHTAVLV). Cys102, His105, Cys124, and His130 together coordinate Zn(2+). Residues 197–243 (QFLKKREQHLLDQLATLEQLLTEGREKFKTRGVSELDRLTLVISELE) adopt a coiled-coil conformation. Positions 298 to 542 (RGLRQFQGKL…WPEARLLLRP (245 aa)) constitute a B30.2/SPRY domain. Residues 379-440 (REGWSEDEEE…EEEEEVQESC (62 aa)) are disordered. Composition is skewed to acidic residues over residues 383–405 (SEDE…EEPG) and 413–437 (WETD…EEVQ). Positions 411–440 (EDWETDEEDESLGEEEEEEEEEEEEVQESC) form a coiled coil.

It belongs to the TRIM/RBCC family. Interacts with TBK1; this interaction bridges together TBK1 and NEMO in order to activate TBK1. Interacts with INCA1. Post-translationally, autoubiquitinates upon viral infection. In turn, autoubiquitinated TRIM26 recruits NEMO and bridges TBK1-NEMO interaction.

It localises to the cytoplasm. The protein localises to the nucleus. The enzyme catalyses S-ubiquitinyl-[E2 ubiquitin-conjugating enzyme]-L-cysteine + [acceptor protein]-L-lysine = [E2 ubiquitin-conjugating enzyme]-L-cysteine + N(6)-ubiquitinyl-[acceptor protein]-L-lysine.. In terms of biological role, E3 ubiquitin-protein ligase which regulates the IFN-beta production and antiviral response downstream of various DNA-encoded pattern-recognition receptors (PRRs). Also plays a central role in determining the response to different forms of oxidative stress by controlling levels of DNA glycosylases NEIL1, NEIL3 and NTH1 that are involved in repair of damaged DNA. Promotes nuclear IRF3 ubiquitination and proteasomal degradation. Bridges together TBK1 and NEMO during the innate response to viral infection leading to the activation of TBK1. Positively regulates LPS-mediated inflammatory innate immune response by catalyzing the 'Lys-11'-linked polyubiquitination of TAB1 to enhance its activation and subsequent NF-kappa-B and MAPK signaling. In a manner independent of its catalytic activity, inhibits WWP2, a SOX2-directed E3 ubiquitin ligase, and thus protects SOX2 from polyubiquitination and proteasomal degradation. Ubiquitinates the histone acetyltransferase protein complex component PHF20 and thereby triggers its degradation in the nucleus after its recruitment by the histone demethylase KDM6B, serving as a scaffold protein. Upon induction by TGF-beta, ubiquitinates the TFIID component TAF7 for proteasomal degradation. Induces ferroptosis by ubiquitinating SLC7A11, a critical protein for lipid reactive oxygen species (ROS) scavenging. The protein is Tripartite motif-containing protein 26 (Trim26) of Rattus norvegicus (Rat).